A 394-amino-acid chain; its full sequence is Elongation factor Tu (394 aa).

Residues 10–204 (KPHVNVGTIG…AVDSYIPQPE (195 aa)) enclose the tr-type G domain. The interval 19 to 26 (GHVDHGKT) is G1. 19 to 26 (GHVDHGKT) provides a ligand contact to GTP. Position 26 (threonine 26) interacts with Mg(2+). The interval 60–64 (GITIS) is G2. Positions 81–84 (DCPG) are G3. GTP-binding positions include 81-85 (DCPGH) and 136-139 (NKCD). The G4 stretch occupies residues 136-139 (NKCD). A G5 region spans residues 174–176 (SAV).

This sequence belongs to the TRAFAC class translation factor GTPase superfamily. Classic translation factor GTPase family. EF-Tu/EF-1A subfamily. In terms of assembly, monomer.

The protein resides in the cytoplasm. It catalyses the reaction GTP + H2O = GDP + phosphate + H(+). In terms of biological role, GTP hydrolase that promotes the GTP-dependent binding of aminoacyl-tRNA to the A-site of ribosomes during protein biosynthesis. In Akkermansia muciniphila (strain ATCC BAA-835 / DSM 22959 / JCM 33894 / BCRC 81048 / CCUG 64013 / CIP 107961 / Muc), this protein is Elongation factor Tu.